The sequence spans 225 residues: Ribonuclease 3 (225 aa).

The RNase III domain occupies 7–129 (IPRLCRTLGY…IIGAIYLDSD (123 aa)). Glutamate 42 serves as a coordination point for Mg(2+). Aspartate 46 is a catalytic residue. Mg(2+) is bound by residues aspartate 115 and glutamate 118. Glutamate 118 is an active-site residue. A DRBM domain is found at 155–225 (DPKTLLQEYL…AAQVLELIKK (71 aa)).

This sequence belongs to the ribonuclease III family. Homodimer. Mg(2+) serves as cofactor.

The protein localises to the cytoplasm. It catalyses the reaction Endonucleolytic cleavage to 5'-phosphomonoester.. Its function is as follows. Digests double-stranded RNA. Involved in the processing of primary rRNA transcript to yield the immediate precursors to the large and small rRNAs (23S and 16S). Processes some mRNAs, and tRNAs when they are encoded in the rRNA operon. Processes pre-crRNA and tracrRNA of type II CRISPR loci if present in the organism. This chain is Ribonuclease 3, found in Shewanella pealeana (strain ATCC 700345 / ANG-SQ1).